Reading from the N-terminus, the 210-residue chain is Large ribosomal subunit protein uL3 (210 aa).

The protein belongs to the universal ribosomal protein uL3 family. In terms of assembly, part of the 50S ribosomal subunit. Forms a cluster with proteins L14 and L19.

Its function is as follows. One of the primary rRNA binding proteins, it binds directly near the 3'-end of the 23S rRNA, where it nucleates assembly of the 50S subunit. The sequence is that of Large ribosomal subunit protein uL3 from Caldicellulosiruptor bescii (strain ATCC BAA-1888 / DSM 6725 / KCTC 15123 / Z-1320) (Anaerocellum thermophilum).